Here is a 481-residue protein sequence, read N- to C-terminus: Proline--tRNA ligase 2 (481 aa).

Belongs to the class-II aminoacyl-tRNA synthetase family. ProS type 3 subfamily. In terms of assembly, homodimer.

It localises to the cytoplasm. The enzyme catalyses tRNA(Pro) + L-proline + ATP = L-prolyl-tRNA(Pro) + AMP + diphosphate. Its function is as follows. Catalyzes the attachment of proline to tRNA(Pro) in a two-step reaction: proline is first activated by ATP to form Pro-AMP and then transferred to the acceptor end of tRNA(Pro). The polypeptide is Proline--tRNA ligase 2 (Clostridioides difficile (strain 630) (Peptoclostridium difficile)).